A 236-amino-acid chain; its full sequence is 1-(5-phosphoribosyl)-5-[(5-phosphoribosylamino)methylideneamino] imidazole-4-carboxamide isomerase (236 aa).

Catalysis depends on Asp8, which acts as the Proton acceptor. Catalysis depends on Asp129, which acts as the Proton donor.

Belongs to the HisA/HisF family.

It is found in the cytoplasm. The enzyme catalyses 1-(5-phospho-beta-D-ribosyl)-5-[(5-phospho-beta-D-ribosylamino)methylideneamino]imidazole-4-carboxamide = 5-[(5-phospho-1-deoxy-D-ribulos-1-ylimino)methylamino]-1-(5-phospho-beta-D-ribosyl)imidazole-4-carboxamide. Its pathway is amino-acid biosynthesis; L-histidine biosynthesis; L-histidine from 5-phospho-alpha-D-ribose 1-diphosphate: step 4/9. The protein is 1-(5-phosphoribosyl)-5-[(5-phosphoribosylamino)methylideneamino] imidazole-4-carboxamide isomerase of Methanosphaerula palustris (strain ATCC BAA-1556 / DSM 19958 / E1-9c).